Reading from the N-terminus, the 172-residue chain is 3-hydroxydecanoyl-[acyl-carrier-protein] dehydratase (172 aa).

The active site involves His-70.

Belongs to the thioester dehydratase family. FabA subfamily. As to quaternary structure, homodimer.

Its subcellular location is the cytoplasm. The catalysed reaction is a (3R)-hydroxyacyl-[ACP] = a (2E)-enoyl-[ACP] + H2O. The enzyme catalyses (3R)-hydroxydecanoyl-[ACP] = (2E)-decenoyl-[ACP] + H2O. It catalyses the reaction (2E)-decenoyl-[ACP] = (3Z)-decenoyl-[ACP]. It participates in lipid metabolism; fatty acid biosynthesis. Functionally, necessary for the introduction of cis unsaturation into fatty acids. Catalyzes the dehydration of (3R)-3-hydroxydecanoyl-ACP to E-(2)-decenoyl-ACP and then its isomerization to Z-(3)-decenoyl-ACP. Can catalyze the dehydratase reaction for beta-hydroxyacyl-ACPs with saturated chain lengths up to 16:0, being most active on intermediate chain length. The sequence is that of 3-hydroxydecanoyl-[acyl-carrier-protein] dehydratase from Xylella fastidiosa (strain M23).